The chain runs to 341 residues: Phosphate acyltransferase (341 aa).

Belongs to the PlsX family. Homodimer. Probably interacts with PlsY.

Its subcellular location is the cytoplasm. The enzyme catalyses a fatty acyl-[ACP] + phosphate = an acyl phosphate + holo-[ACP]. Its pathway is lipid metabolism; phospholipid metabolism. In terms of biological role, catalyzes the reversible formation of acyl-phosphate (acyl-PO(4)) from acyl-[acyl-carrier-protein] (acyl-ACP). This enzyme utilizes acyl-ACP as fatty acyl donor, but not acyl-CoA. This Chlorobaculum parvum (strain DSM 263 / NCIMB 8327) (Chlorobium vibrioforme subsp. thiosulfatophilum) protein is Phosphate acyltransferase.